The sequence spans 171 residues: S-ribosylhomocysteine lyase (171 aa).

3 residues coordinate Fe cation: His-54, His-58, and Cys-128.

It belongs to the LuxS family. In terms of assembly, homodimer. The cofactor is Fe cation.

The enzyme catalyses S-(5-deoxy-D-ribos-5-yl)-L-homocysteine = (S)-4,5-dihydroxypentane-2,3-dione + L-homocysteine. Involved in the synthesis of autoinducer 2 (AI-2) which is secreted by bacteria and is used to communicate both the cell density and the metabolic potential of the environment. The regulation of gene expression in response to changes in cell density is called quorum sensing. Catalyzes the transformation of S-ribosylhomocysteine (RHC) to homocysteine (HC) and 4,5-dihydroxy-2,3-pentadione (DPD). This is S-ribosylhomocysteine lyase from Salmonella agona (strain SL483).